The sequence spans 443 residues: Cobyrinate a,c-diamide synthase (443 aa).

The GATase cobBQ-type domain occupies 248-433 (KIAVAYDKAF…LHNHAVANPY (186 aa)). Residue cysteine 327 is the Nucleophile of the active site.

The protein belongs to the CobB/CbiA family. Mg(2+) serves as cofactor.

The enzyme catalyses cob(II)yrinate + 2 L-glutamine + 2 ATP + 2 H2O = cob(II)yrinate a,c diamide + 2 L-glutamate + 2 ADP + 2 phosphate + 2 H(+). It carries out the reaction Ni-sirohydrochlorin + 2 L-glutamine + 2 ATP + 2 H2O = Ni-sirohydrochlorin a,c-diamide + 2 L-glutamate + 2 ADP + 2 phosphate + 2 H(+). It functions in the pathway cofactor biosynthesis; adenosylcobalamin biosynthesis; cob(II)yrinate a,c-diamide from sirohydrochlorin (anaerobic route): step 10/10. Catalyzes the ATP-dependent amidation of the two carboxylate groups at positions a and c of cobyrinate, using either L-glutamine or ammonia as the nitrogen source. Involved in the biosynthesis of the unique nickel-containing tetrapyrrole coenzyme F430, the prosthetic group of methyl-coenzyme M reductase (MCR), which plays a key role in methanogenesis and anaerobic methane oxidation. Catalyzes the ATP-dependent amidation of the two carboxylate groups at positions a and c of Ni-sirohydrochlorin, using L-glutamine or ammonia as the nitrogen source. This Methanocaldococcus jannaschii (strain ATCC 43067 / DSM 2661 / JAL-1 / JCM 10045 / NBRC 100440) (Methanococcus jannaschii) protein is Cobyrinate a,c-diamide synthase.